The following is a 309-amino-acid chain: Low density lipoprotein receptor adapter protein 1-A (309 aa).

Positions 41-195 (LLEGMLFHLK…SGGEGASSSQ (155 aa)) constitute a PID domain. A disordered region spans residues 179–199 (EKREKSGSGGEGASSSQSDGS). The Clathrin box motif lies at 213–217 (LLDLE). An AP-2 complex binding region spans residues 250–277 (WELDDGLDEAFARLAESRTNPQVLDIGL). The short motif at 258–267 (EAFARLAESR) is the [DE]-X(1,2)-F-X-X-[FL]-X-X-X-R motif element.

In terms of assembly, interacts (via PID domain) with ldlr (via NPXY motif). Binds to soluble clathrin trimers and to the adapter protein complex 2 (AP-2, beta 2 subunit). Binds to phosphoinositides, which regulate clathrin bud assembly at the cell surface. Interacts with the VLDL receptor (vldlr). Interacts with the vitellogenin receptor. Expressed at high level during oogenesis and embryogenesis. Found in the oocyte vegetal cortex. Found at low level in the adult liver and spleen. Found at very low level in testis and heart.

It localises to the cytoplasm. Functionally, adapter protein (clathrin-associated sorting protein (CLASP)) required for efficient endocytosis of the LDL receptor (LDLR). Also involved in the vitellogenin receptor mediated endocytosis of nutrients during oogenesis. This chain is Low density lipoprotein receptor adapter protein 1-A, found in Xenopus laevis (African clawed frog).